The sequence spans 157 residues: Protein Smg (157 aa).

The protein belongs to the Smg family.

The chain is Protein Smg from Shigella boydii serotype 4 (strain Sb227).